Reading from the N-terminus, the 44-residue chain is Photosystem I reaction center subunit IX (44 aa).

The helical transmembrane segment at 7 to 27 (YLSVAPVLSTLWFGALAGLLI) threads the bilayer.

Belongs to the PsaJ family.

Its subcellular location is the plastid. The protein resides in the chloroplast thylakoid membrane. In terms of biological role, may help in the organization of the PsaE and PsaF subunits. This is Photosystem I reaction center subunit IX from Eucalyptus globulus subsp. globulus (Tasmanian blue gum).